A 624-amino-acid polypeptide reads, in one-letter code: MSKSLPYSVKDIHYDNAKFRHRSPLKVFSQSLLTLSTKRNYASCSTGKFLILILFFGVACLMLMSKSPNESGLNEKGKVTFVGGLRLGGLLRKPPRLPPRLSPDEGQLRGSSTNGSTISNSDPKWAARQQSVKEAFDHAWSGYRKYAMGYDELMPISQKGVDGLGGLGATVVDALDTAMIMGLDNIVSEAGSWVETHLLERISQKGQVNLFETTIRVLGGLLSAYHLSGGEQGTVNMTHVGPKPVIYLNIAKDLADRLLSAFTSSPTPVPFCDVILHESTAHPAPGGASSTAEVASVQLEFNYLSSISGDPKYSTEAMKVLAHIKTLPKTEGLVPIYISPQTGDFVGENIRLGSRGDSYYEYLIKVWLQQGAKLNSNFTYLHDMYIEAMKGVRHLLVQNSIPKGLVFVGELPYGSKGEFSPKMDHLVCFLPGTLALGATKGLTKEQALKENLLSFEDLENLKLAEDLAKTCFEMYEVTATGLAPEIAYFHTKDYTEDGLDGGNKSSMYANDIIIKPADRHNLLRPETVESLFVLYRITKDTKYRDQGWQIFEAFEKYTKVKSGGYTSLDDVTEVPPHRRDKMETFFLGETLKYLYLLFGDDSVIPLDKFVFNTEAHPLPIRRNT.

Topologically, residues 1-43 (MSKSLPYSVKDIHYDNAKFRHRSPLKVFSQSLLTLSTKRNYAS) are cytoplasmic. A helical; Signal-anchor for type II membrane protein membrane pass occupies residues 44–64 (CSTGKFLILILFFGVACLMLM). The Lumenal portion of the chain corresponds to 65–624 (SKSPNESGLN…AHPLPIRRNT (560 aa)). Residues N69 and N114 are each glycosylated (N-linked (GlcNAc...) asparagine). The disordered stretch occupies residues 91-123 (LRKPPRLPPRLSPDEGQLRGSSTNGSTISNSDP). The span at 110–121 (GSSTNGSTISNS) shows a compositional bias: low complexity. The active-site Proton donor is E212. The N-linked (GlcNAc...) asparagine glycan is linked to N236. The active site involves D357. A glycan (N-linked (GlcNAc...) asparagine) is linked at N377. A disulfide bond links C428 and C471. The active-site Proton donor is the E485. The N-linked (GlcNAc...) asparagine glycan is linked to N503. E526 is a catalytic residue. Residue T613 participates in Ca(2+) binding.

The protein belongs to the glycosyl hydrolase 47 family. Ca(2+) is required as a cofactor. Requires Mn(2+) as cofactor. Mg(2+) serves as cofactor. In terms of tissue distribution, expressed in flowers, siliques, stems, leaves, roots, stamens and sepals.

Its subcellular location is the golgi apparatus. It localises to the cis-Golgi network membrane. It catalyses the reaction N(4)-(alpha-D-Man-(1-&gt;2)-alpha-D-Man-(1-&gt;2)-alpha-D-Man-(1-&gt;3)-[alpha-D-Man-(1-&gt;2)-alpha-D-Man-(1-&gt;3)-[alpha-D-Man-(1-&gt;2)-alpha-D-Man-(1-&gt;6)]-alpha-D-Man-(1-&gt;6)]-beta-D-Man-(1-&gt;4)-beta-D-GlcNAc-(1-&gt;4)-beta-D-GlcNAc)-L-asparaginyl-[protein] (N-glucan mannose isomer 9A1,2,3B1,2,3) + 4 H2O = N(4)-(alpha-D-Man-(1-&gt;3)-[alpha-D-Man-(1-&gt;3)-[alpha-D-Man-(1-&gt;6)]-alpha-D-Man-(1-&gt;6)]-beta-D-Man-(1-&gt;4)-beta-D-GlcNAc-(1-&gt;4)-beta-D-GlcNAc)-L-asparaginyl-[protein] (N-glucan mannose isomer 5A1,2) + 4 beta-D-mannose. The enzyme catalyses N(4)-(alpha-D-Man-(1-&gt;2)-alpha-D-Man-(1-&gt;2)-alpha-D-Man-(1-&gt;3)-[alpha-D-Man-(1-&gt;3)-[alpha-D-Man-(1-&gt;2)-alpha-D-Man-(1-&gt;6)]-alpha-D-Man-(1-&gt;6)]-beta-D-Man-(1-&gt;4)-beta-D-GlcNAc-(1-&gt;4)-beta-D-GlcNAc)-L-asparaginyl-[protein] (N-glucan mannose isomer 8A1,2,3B1,3) + 3 H2O = N(4)-(alpha-D-Man-(1-&gt;3)-[alpha-D-Man-(1-&gt;3)-[alpha-D-Man-(1-&gt;6)]-alpha-D-Man-(1-&gt;6)]-beta-D-Man-(1-&gt;4)-beta-D-GlcNAc-(1-&gt;4)-beta-D-GlcNAc)-L-asparaginyl-[protein] (N-glucan mannose isomer 5A1,2) + 3 beta-D-mannose. The catalysed reaction is N(4)-(alpha-D-Man-(1-&gt;2)-alpha-D-Man-(1-&gt;2)-alpha-D-Man-(1-&gt;3)-[alpha-D-Man-(1-&gt;2)-alpha-D-Man-(1-&gt;3)-[alpha-D-Man-(1-&gt;2)-alpha-D-Man-(1-&gt;6)]-alpha-D-Man-(1-&gt;6)]-beta-D-Man-(1-&gt;4)-beta-D-GlcNAc-(1-&gt;4)-beta-D-GlcNAc)-L-asparaginyl-[protein] (N-glucan mannose isomer 9A1,2,3B1,2,3) + H2O = N(4)-(alpha-D-Man-(1-&gt;2)-alpha-D-Man-(1-&gt;2)-alpha-D-Man-(1-&gt;3)-[alpha-D-Man-(1-&gt;3)-[alpha-D-Man-(1-&gt;2)-alpha-D-Man-(1-&gt;6)]-alpha-D-Man-(1-&gt;6)]-beta-D-Man-(1-&gt;4)-beta-D-GlcNAc-(1-&gt;4)-beta-D-GlcNAc)-L-asparaginyl-[protein] (N-glucan mannose isomer 8A1,2,3B1,3) + beta-D-mannose. Its pathway is protein modification; protein glycosylation. With respect to regulation, inhibited by kifunensine and 1-deoxymannojirimycin, but not by swainsonine. Class I alpha-mannosidase essential for early N-glycan processing. Removes preferentially alpha-1,2-linked mannose residues from Man(9)GlcNAc(2) to produce Man(8)GlcNAc(2). Involved in root development and cell wall biosynthesis. This chain is Mannosyl-oligosaccharide 1,2-alpha-mannosidase MNS3 (MNS3), found in Arabidopsis thaliana (Mouse-ear cress).